The sequence spans 92 residues: Acylphosphatase (92 aa).

One can recognise an Acylphosphatase-like domain in the interval 3–90 (RVHVLVAGRV…GEFTEFAVLR (88 aa)). Active-site residues include Arg-18 and Asn-36.

The protein belongs to the acylphosphatase family.

It carries out the reaction an acyl phosphate + H2O = a carboxylate + phosphate + H(+). The chain is Acylphosphatase (acyP) from Methylococcus capsulatus (strain ATCC 33009 / NCIMB 11132 / Bath).